Reading from the N-terminus, the 142-residue chain is Endoribonuclease YbeY (142 aa).

Zn(2+) is bound by residues His-107, His-111, and Asp-117.

Belongs to the endoribonuclease YbeY family. Zn(2+) serves as cofactor.

It is found in the cytoplasm. Its function is as follows. Single strand-specific metallo-endoribonuclease involved in late-stage 70S ribosome quality control and in maturation of the 3' terminus of the 16S rRNA. This chain is Endoribonuclease YbeY, found in Chlorobium phaeobacteroides (strain DSM 266 / SMG 266 / 2430).